A 56-amino-acid chain; its full sequence is uncharacterized protein (56 aa).

This is an uncharacterized protein from Orgyia pseudotsugata (Douglas-fir tussock moth).